Here is a 580-residue protein sequence, read N- to C-terminus: tRNA-guanine(15) transglycosylase (580 aa).

The active-site Nucleophile is the Asp-91. 2 residues coordinate substrate: Asp-126 and Ala-192. The Zn(2+) site is built by Cys-275, Cys-277, and Cys-280. The region spanning Arg-504–Glu-579 is the PUA domain.

The protein belongs to the archaeosine tRNA-ribosyltransferase family. Requires Zn(2+) as cofactor.

It carries out the reaction guanosine(15) in tRNA + 7-cyano-7-deazaguanine = 7-cyano-7-carbaguanosine(15) in tRNA + guanine. It participates in tRNA modification; archaeosine-tRNA biosynthesis. Exchanges the guanine residue with 7-cyano-7-deazaguanine (preQ0) at position 15 in the dihydrouridine loop (D-loop) of archaeal tRNAs. This chain is tRNA-guanine(15) transglycosylase, found in Thermococcus kodakarensis (strain ATCC BAA-918 / JCM 12380 / KOD1) (Pyrococcus kodakaraensis (strain KOD1)).